Here is an 868-residue protein sequence, read N- to C-terminus: MAATQEAETATNGAGHTPMMRQFLRIKAEYPETLLFYRMGDFYELFYEDAERAAKLLDITLTTRGESAGAPIPMAGVPVQSVESYLARLVRLGESVAICEQIGDPNTTKGPVERQVVRVVTPGTLTEDALLEERSANLLTAVAPGPKGRFGVASLELSSGRFSVLEAPDQEALTAELERLRPAELILPDDDQTPAPEGGCVAQRRPSWHFEYDSARRLLLRQLGTHDLSGFGAEELHAPVTAAGALLQYLNETQRAALPHVGALTVESRDEAITIDAASRRNLEIEHNLSGGTEHTLASVIDTSVTAMGGRLLRRWLQRPLRRRETIAARHAAVAALADGAFADVRSTLEGCADVERILARVALGTARPRDLTGLRDALERLPQLQILLGQLNSHRLQALGVELDEHPQTVDLLQRAIIDTPPATVRDGGVIADGFDGELDELRSMSRNADDYLAALEAEERAATGIPTLKVGFNRVHGYYIEVSRSQSGHMPERYTRRQTLKAAERFITPELKRFEEQVLSARERALAREKALYEQLVADLASELTPLQRSASALAELDALAAFAERARSLDYVQPELADTPGVRIEGGRHPVVEQALDAPFVPNDVRLDNRRRMLLITGPNMGGKSTYMRQTALIALLAYAGAFVPAQRAVLGPIDRIFTRIGAADDLASGRSTFMVEMTETANILHNATAESLVLMDEIGRGTSTFDGLALAWATAERLATRIRAFTLFATHYFEMTALEQIHPGVVNVHLEAAEHGERIVFLHAVRDGPANQSYGLQVAALAGVPQEVLKAAREKLRSLESGDGGDTGSAQLPLFGPEPVFPPPAQPEPEPDPIREAVENLDPDGLTPRDALETIYWLKAQCKE.

621 to 628 (GPNMGGKS) is a binding site for ATP. The interval 803–852 (LESGDGGDTGSAQLPLFGPEPVFPPPAQPEPEPDPIREAVENLDPDGLTP) is disordered. Residues 823–832 (PVFPPPAQPE) show a composition bias toward pro residues.

It belongs to the DNA mismatch repair MutS family.

Functionally, this protein is involved in the repair of mismatches in DNA. It is possible that it carries out the mismatch recognition step. This protein has a weak ATPase activity. This is DNA mismatch repair protein MutS from Halorhodospira halophila (strain DSM 244 / SL1) (Ectothiorhodospira halophila (strain DSM 244 / SL1)).